A 744-amino-acid polypeptide reads, in one-letter code: Glucosamine inositolphosphorylceramide transferase 1 (744 aa).

3 helical membrane-spanning segments follow: residues 31-51 (FLVAAAAGAALVGGVYFWLVV), 378-398 (SLFGYMGFLVAVALVTFVGFV), and 460-480 (LFFCVIALIGIVNVCIAVHFL). Substrate-binding positions include N534, 558–563 (NSLNNR), 579–581 (DDD), R609, and 665–669 (FNCED). Residue D581 coordinates Mn(2+). The cysteines at positions 667 and 718 are disulfide-linked. Residue D669 is part of the active site.

The protein belongs to the glycosyltransferase 64 family. Mn(2+) is required as a cofactor.

The protein resides in the membrane. The protein operates within sphingolipid metabolism. Essential protein. Glycosyltransferase that mediates the glycosylation of glycosylinositol phosphorylceramides (GIPCs), the major sphingolipids in the plasma membrane; acts as a HexN(Ac)-specific GIPC sugar transferase. Responsible for the glycosylation of a subgroup of GIPCs found in seeds and pollen that contain GlcNAc and GlcN (GlcN(Ac)). Maybe involved in the maintenance of cell-cell adhesion. The sequence is that of Glucosamine inositolphosphorylceramide transferase 1 from Oryza sativa subsp. indica (Rice).